A 77-amino-acid chain; its full sequence is Acyl carrier protein (77 aa).

In terms of domain architecture, Carrier spans 3–77 (QEIFEKVKKI…GKAVEHIESK (75 aa)). S38 is modified (O-(pantetheine 4'-phosphoryl)serine).

It belongs to the acyl carrier protein (ACP) family. Post-translationally, 4'-phosphopantetheine is transferred from CoA to a specific serine of apo-ACP by AcpS. This modification is essential for activity because fatty acids are bound in thioester linkage to the sulfhydryl of the prosthetic group.

The protein resides in the cytoplasm. It participates in lipid metabolism; fatty acid biosynthesis. Its function is as follows. Carrier of the growing fatty acid chain in fatty acid biosynthesis. The sequence is that of Acyl carrier protein from Synechocystis sp. (strain ATCC 27184 / PCC 6803 / Kazusa).